The chain runs to 83 residues: Normal mucosa of esophagus-specific gene 1 protein (83 aa).

It belongs to the complex I NDUFA4 subunit family.

The protein resides in the nucleus. This Rattus norvegicus (Rat) protein is Normal mucosa of esophagus-specific gene 1 protein (Nmes1).